The chain runs to 103 residues: UPF0145 protein PBPRB0184 (103 aa).

The protein belongs to the UPF0145 family.

The polypeptide is UPF0145 protein PBPRB0184 (Photobacterium profundum (strain SS9)).